Consider the following 271-residue polypeptide: OX-2 membrane glycoprotein homolog (271 aa).

The N-terminal stretch at 1-24 is a signal peptide; that stretch reads MSSLFISLPWVAFIWLALLGAVGG. The Extracellular segment spans residues 25-227; that stretch reads ARVQGPMRGS…QGPLAHDLPA (203 aa). Positions 26 to 129 constitute an Ig-like V-type domain; the sequence is RVQGPMRGSA…SCTACLEVTS (104 aa). A disulfide bridge links Cys-39 with Cys-109. N-linked (GlcNAc...) asparagine; by host glycosylation is found at Asn-83, Asn-91, Asn-138, Asn-157, Asn-166, and Asn-208. Residues 130–220 form the Ig-like C2-type domain; it reads PPTGHVQVNS…ISIPASIQGP (91 aa). Cys-148 and Cys-202 are joined by a disulfide. Residues 228-248 form a helical membrane-spanning segment; sequence AQGTLAGVAITLVGLFGIFAL. Topologically, residues 249–271 are cytoplasmic; the sequence is HHCRRKQGGASPTSDDMDPLSTQ.

In terms of assembly, interacts with human CD200R1. N-glycosylated.

Its subcellular location is the host cell membrane. Dramatically stimulates primary monocytes, macrophages, and dendritic cells to produce the inflammatory cytokines interleukin 1-beta, IL-6, monocyte chemoattractant protein 1, and TNF-alpha. The induction of inflammatory cytokine production potentially promotes the cytokine-mediated angiogenic proliferation of KSHV-infected cells. This Human herpesvirus 8 type P (isolate GK18) (HHV-8) protein is OX-2 membrane glycoprotein homolog (K14).